We begin with the raw amino-acid sequence, 385 residues long: Chaperone protein DnaJ (385 aa).

The J domain maps to 5–70; that stretch reads DFYEVLGVSR…QKKAAYDQYG (66 aa). A CR-type zinc finger spans residues 137 to 214; it reads GVSKEIEVPT…CHGQGRKQKT (78 aa). Zn(2+)-binding residues include cysteine 150, cysteine 153, cysteine 167, cysteine 170, cysteine 189, cysteine 192, cysteine 202, and cysteine 205. CXXCXGXG motif repeat units follow at residues 150 to 157, 167 to 174, 189 to 196, and 202 to 209; these read CDTCDGSG, CGTCHGHG, CPTCHGKG, and CNECHGQG.

Belongs to the DnaJ family. As to quaternary structure, homodimer. It depends on Zn(2+) as a cofactor.

It is found in the cytoplasm. Its function is as follows. Participates actively in the response to hyperosmotic and heat shock by preventing the aggregation of stress-denatured proteins and by disaggregating proteins, also in an autonomous, DnaK-independent fashion. Unfolded proteins bind initially to DnaJ; upon interaction with the DnaJ-bound protein, DnaK hydrolyzes its bound ATP, resulting in the formation of a stable complex. GrpE releases ADP from DnaK; ATP binding to DnaK triggers the release of the substrate protein, thus completing the reaction cycle. Several rounds of ATP-dependent interactions between DnaJ, DnaK and GrpE are required for fully efficient folding. Also involved, together with DnaK and GrpE, in the DNA replication of plasmids through activation of initiation proteins. The protein is Chaperone protein DnaJ of Vibrio harveyi (Beneckea harveyi).